Here is a 151-residue protein sequence, read N- to C-terminus: MMAEEHTDLEAQIVKDIHCKEIDLVNRDPKNINEDIVKVDFEDVIAEPVGTYSFDGVWKVSYTTFTVSKYWCYRLLSTLLGVPLALLWGFLFACISFCHIWAVVPCIKSYLIEIQCISHIYSLCIRTFCNPLFAALGQVCSSIKVVLRKEV.

Over 1 to 83 (MMAEEHTDLE…RLLSTLLGVP (83 aa)) the chain is Cytoplasmic. Lys38 is covalently cross-linked (Glycyl lysine isopeptide (Lys-Gly) (interchain with G-Cter in SUMO3)). A required for interaction with DAG1 region spans residues 64–114 (TFTVSKYWCYRLLSTLLGVPLALLWGFLFACISFCHIWAVVPCIKSYLIEI). An intramembrane region (helical) is located at residues 84 to 104 (LALLWGFLFACISFCHIWAVV). Topologically, residues 105 to 151 (PCIKSYLIEIQCISHIYSLCIRTFCNPLFAALGQVCSSIKVVLRKEV) are cytoplasmic.

It belongs to the caveolin family. In terms of assembly, homooligomer. Interacts with DLG1 and KCNA5; forms a ternary complex. Interacts with TRIM72. Interacts with MUSK; may regulate MUSK signaling. Interacts with DAG1 (via its C-terminal); the interaction prevents binding of DAG1 with DMD. Interacts with DYSF. Interacts with POPDC1. Interacts with CAVIN1 and CAVIN2. Interacts with CAVIN4. Post-translationally, sumoylation with SUMO3 by PIAS4 may reduce agonist-induced internalization and desensitization of adrenergic receptor ABRD2. Expressed predominantly in muscle.

Its subcellular location is the golgi apparatus membrane. The protein localises to the cell membrane. It is found in the membrane. It localises to the caveola. The protein resides in the sarcolemma. May act as a scaffolding protein within caveolar membranes. Interacts directly with G-protein alpha subunits and can functionally regulate their activity. May also regulate voltage-gated potassium channels. Plays a role in the sarcolemma repair mechanism of both skeletal muscle and cardiomyocytes that permits rapid resealing of membranes disrupted by mechanical stress. Mediates the recruitment of CAVIN2 and CAVIN3 proteins to the caveolae. The polypeptide is Caveolin-3 (CAV3) (Homo sapiens (Human)).